The following is a 140-amino-acid chain: Large ribosomal subunit protein uL16 (140 aa).

This sequence belongs to the universal ribosomal protein uL16 family. As to quaternary structure, part of the 50S ribosomal subunit.

Its function is as follows. Binds 23S rRNA and is also seen to make contacts with the A and possibly P site tRNAs. This chain is Large ribosomal subunit protein uL16, found in Geotalea uraniireducens (strain Rf4) (Geobacter uraniireducens).